The following is a 534-amino-acid chain: Probable alanine aminotransferase, mitochondrial (534 aa).

Residues 1-18 (MFKRSLKVLLSNPPINRV) constitute a mitochondrion transit peptide. At Lys-352 the chain carries N6-(pyridoxal phosphate)lysine.

This sequence belongs to the class-I pyridoxal-phosphate-dependent aminotransferase family. Alanine aminotransferase subfamily. Homodimer. It depends on pyridoxal 5'-phosphate as a cofactor.

It localises to the mitochondrion matrix. The enzyme catalyses L-alanine + 2-oxoglutarate = pyruvate + L-glutamate. It functions in the pathway amino-acid degradation; L-alanine degradation via transaminase pathway; pyruvate from L-alanine: step 1/1. In Dictyostelium discoideum (Social amoeba), this protein is Probable alanine aminotransferase, mitochondrial (gpt).